Consider the following 133-residue polypeptide: uncharacterized protein (133 aa).

Positions 9 to 128 (RILVYSDNVQ…VLGRTVLSLL (120 aa)) constitute a Response regulatory domain. A 4-aspartylphosphate modification is found at aspartate 64.

This is an uncharacterized protein from Mycobacterium tuberculosis (strain CDC 1551 / Oshkosh).